The primary structure comprises 84 residues: Sec-independent protein translocase protein TatA (84 aa).

The helical transmembrane segment at 1–21 threads the bilayer; the sequence is MGGISIWQLLIVAVIVVLLFG. Basic and acidic residues-rich tracts occupy residues 42-55 and 64-84; these read AMSDDDAKQDKTSQ and IADKQGEAKKEDAKSQDKEQV. The segment at 42-84 is disordered; the sequence is AMSDDDAKQDKTSQDADFTAKSIADKQGEAKKEDAKSQDKEQV.

Belongs to the TatA/E family. As to quaternary structure, the Tat system comprises two distinct complexes: a TatABC complex, containing multiple copies of TatA, TatB and TatC subunits, and a separate TatA complex, containing only TatA subunits. Substrates initially bind to the TatABC complex, which probably triggers association of the separate TatA complex to form the active translocon.

It localises to the cell inner membrane. Part of the twin-arginine translocation (Tat) system that transports large folded proteins containing a characteristic twin-arginine motif in their signal peptide across membranes. TatA could form the protein-conducting channel of the Tat system. The chain is Sec-independent protein translocase protein TatA from Salmonella typhi.